The following is a 428-amino-acid chain: Histidine--tRNA ligase (428 aa).

Belongs to the class-II aminoacyl-tRNA synthetase family.

The protein localises to the cytoplasm. The catalysed reaction is tRNA(His) + L-histidine + ATP = L-histidyl-tRNA(His) + AMP + diphosphate + H(+). The polypeptide is Histidine--tRNA ligase (Sulfolobus acidocaldarius (strain ATCC 33909 / DSM 639 / JCM 8929 / NBRC 15157 / NCIMB 11770)).